Reading from the N-terminus, the 542-residue chain is CTP synthase (542 aa).

The interval 1 to 265 (MTAFIFITGG…GRMLTELLKV (265 aa)) is amidoligase domain. Serine 13 provides a ligand contact to CTP. Residue serine 13 coordinates UTP. 14–19 (SVGKGI) is an ATP binding site. Tyrosine 54 contributes to the L-glutamine binding site. Aspartate 71 contributes to the ATP binding site. 2 residues coordinate Mg(2+): aspartate 71 and glutamate 140. Residues 147–149 (DYE), 186–191 (KTKPLQ), and lysine 222 contribute to the CTP site. UTP is bound by residues 186–191 (KTKPLQ) and lysine 222. The Glutamine amidotransferase type-1 domain maps to 297–532 (YVKLRDAYIS…LKAALARKMG (236 aa)). Glycine 352 is an L-glutamine binding site. The active-site Nucleophile; for glutamine hydrolysis is cysteine 379. Residues 380–383 (YGMQ), glutamate 403, and arginine 460 contribute to the L-glutamine site. Residues histidine 505 and glutamate 507 contribute to the active site.

Belongs to the CTP synthase family. In terms of assembly, homotetramer.

It carries out the reaction UTP + L-glutamine + ATP + H2O = CTP + L-glutamate + ADP + phosphate + 2 H(+). The enzyme catalyses L-glutamine + H2O = L-glutamate + NH4(+). The catalysed reaction is UTP + NH4(+) + ATP = CTP + ADP + phosphate + 2 H(+). It functions in the pathway pyrimidine metabolism; CTP biosynthesis via de novo pathway; CTP from UDP: step 2/2. Allosterically activated by GTP, when glutamine is the substrate; GTP has no effect on the reaction when ammonia is the substrate. The allosteric effector GTP functions by stabilizing the protein conformation that binds the tetrahedral intermediate(s) formed during glutamine hydrolysis. Inhibited by the product CTP, via allosteric rather than competitive inhibition. Its function is as follows. Catalyzes the ATP-dependent amination of UTP to CTP with either L-glutamine or ammonia as the source of nitrogen. Regulates intracellular CTP levels through interactions with the four ribonucleotide triphosphates. The protein is CTP synthase of Caldivirga maquilingensis (strain ATCC 700844 / DSM 13496 / JCM 10307 / IC-167).